We begin with the raw amino-acid sequence, 85 residues long: Acyl carrier protein ScoB (85 aa).

In terms of domain architecture, Carrier spans 1-77 (MPAPLTLDGF…QWWQLLSARQ (77 aa)). Position 38 is an O-(pantetheine 4'-phosphoryl)serine (Ser-38).

The protein belongs to the acyl carrier protein (ACP) family. Pantetheine 4'-phosphate is required as a cofactor.

Its pathway is lipid metabolism; fatty acid metabolism. Acyl-carrier protein (ACP) involved in the biosynthesis of a unique class of isonitrile lipopeptides (INLPs). Is the dedicated ACP for the loading of activated acyl groups catalyzed by ScoC. The chain is Acyl carrier protein ScoB from Streptomyces coeruleorubidus.